A 691-amino-acid chain; its full sequence is Proprotein convertase subtilisin/kexin type 9 (691 aa).

The N-terminal stretch at 1-30 (MGIRCSTWLRWPLSPQLLLLLLLCPTGSRA) is a signal peptide. The propeptide occupies 31 to 151 (QDEDGDYEEL…IEEDSLVFAQ (121 aa)). Y37 bears the Sulfotyrosine mark. The residue at position 46 (S46) is a Phosphoserine. A Peptidase S8 domain is found at 154 to 441 (PWNLERIIPA…QRVLTPNRVA (288 aa)). Active-site charge relay system residues include D185 and H225. Cystine bridges form between C222–C254 and C322–C357. S385 serves as the catalytic Charge relay system. Residues 449–691 (ETGGQLLCRT…PSAKASWVHQ (243 aa)) are C-terminal domain. 3 disulfides stabilise this stretch: C456–C526, C476–C525, and C485–C508. Residues 495-497 (RGD) carry the Cell attachment site motif. The N-linked (GlcNAc...) asparagine glycan is linked to N532. Disulfide bonds link C533/C600, C551/C599, C561/C587, C607/C678, C625/C677, and C634/C653. Position 687 is a phosphoserine (S687).

The protein belongs to the peptidase S8 family. Monomer. Can self-associate to form dimers and higher multimers which may have increased LDLR degrading activity. The precursor protein but not the mature protein may form multimers. Interacts with APOB, VLDLR, LRP8/APOER2 and BACE1. The full-length immature form (pro-PCSK9) interacts with SCNN1A, SCNN1B and SCNN1G. The pro-PCSK9 form (via C-terminal domain) interacts with LDLR. Interacts (via the C-terminal domain) with ANXA2 (via repeat Annexin 1); the interaction inhibits the degradation of LDLR. Ca(2+) serves as cofactor. In terms of processing, cleavage by furin and PCSK5 generates a truncated inactive protein that is unable to induce LDLR degradation. Undergoes autocatalytic cleavage in the endoplasmic reticulum to release the propeptide from the N-terminus and the cleavage of the propeptide is strictly required for its maturation and activation. The cleaved propeptide however remains associated with the catalytic domain through non-covalent interactions, preventing potential substrates from accessing its active site. As a result, it is secreted from cells as a propeptide-containing, enzymatically inactive protein. Post-translationally, phosphorylation protects the propeptide against proteolysis. Highly expressed in 12-day embryo. In the adult, strongly expressed in liver, small intestine, jejunum, and to a lesser extent in kidney, lung, spleen and thymus. Expression in the liver is up-regulated following partial hepatectomy.

It localises to the cytoplasm. Its subcellular location is the secreted. The protein localises to the endosome. The protein resides in the lysosome. It is found in the cell surface. It localises to the endoplasmic reticulum. Its subcellular location is the golgi apparatus. With respect to regulation, its proteolytic activity is autoinhibited by the non-covalent binding of the propeptide to the catalytic domain. Inhibited by EGTA. In terms of biological role, crucial player in the regulation of plasma cholesterol homeostasis. Binds to low-density lipid receptor family members: low density lipoprotein receptor (LDLR), very low density lipoprotein receptor (VLDLR), apolipoprotein E receptor (LRP1/APOER) and apolipoprotein receptor 2 (LRP8/APOER2), and promotes their degradation in intracellular acidic compartments. Acts via a non-proteolytic mechanism to enhance the degradation of the hepatic LDLR through a clathrin LDLRAP1/ARH-mediated pathway. May prevent the recycling of LDLR from endosomes to the cell surface or direct it to lysosomes for degradation. Can induce ubiquitination of LDLR leading to its subsequent degradation. Inhibits intracellular degradation of APOB via the autophagosome/lysosome pathway in a LDLR-independent manner. Involved in the disposal of non-acetylated intermediates of BACE1 in the early secretory pathway. Inhibits epithelial Na(+) channel (ENaC)-mediated Na(+) absorption by reducing ENaC surface expression primarily by increasing its proteasomal degradation. Regulates neuronal apoptosis via modulation of LRP8/APOER2 levels and related anti-apoptotic signaling pathways. The polypeptide is Proprotein convertase subtilisin/kexin type 9 (Pcsk9) (Rattus norvegicus (Rat)).